Consider the following 733-residue polypeptide: Polyribonucleotide nucleotidyltransferase (733 aa).

2 residues coordinate Mg(2+): aspartate 503 and aspartate 509. One can recognise a KH domain in the interval 570–629 (PRLTTIQIPVDAIGMVIGKGGETIRSITEETGAEINIDDDGTVTIACSSPEATKAAVETI). The 75-residue stretch at 639-713 (GTIYMGKVRD…GKTKFALSIK (75 aa)) folds into the S1 motif domain.

Belongs to the polyribonucleotide nucleotidyltransferase family. Mg(2+) is required as a cofactor.

Its subcellular location is the cytoplasm. It carries out the reaction RNA(n+1) + phosphate = RNA(n) + a ribonucleoside 5'-diphosphate. Involved in mRNA degradation. Catalyzes the phosphorolysis of single-stranded polyribonucleotides processively in the 3'- to 5'-direction. In Chlorobaculum tepidum (strain ATCC 49652 / DSM 12025 / NBRC 103806 / TLS) (Chlorobium tepidum), this protein is Polyribonucleotide nucleotidyltransferase.